Here is a 480-residue protein sequence, read N- to C-terminus: ATP synthase subunit beta (480 aa).

An ATP-binding site is contributed by 154–161 (GGAGVGKT).

It belongs to the ATPase alpha/beta chains family. As to quaternary structure, F-type ATPases have 2 components, CF(1) - the catalytic core - and CF(0) - the membrane proton channel. CF(1) has five subunits: alpha(3), beta(3), gamma(1), delta(1), epsilon(1). CF(0) has four main subunits: a(1), b(1), b'(1) and c(9-12).

The protein localises to the cell inner membrane. The enzyme catalyses ATP + H2O + 4 H(+)(in) = ADP + phosphate + 5 H(+)(out). Functionally, produces ATP from ADP in the presence of a proton gradient across the membrane. The catalytic sites are hosted primarily by the beta subunits. The chain is ATP synthase subunit beta from Bradyrhizobium sp. (strain ORS 278).